The sequence spans 340 residues: Probable complex I intermediate-associated protein 30, mitochondrial (340 aa).

The protein belongs to the CIA30 family.

The protein resides in the mitochondrion. Functionally, chaperone protein involved in the assembly of the mitochondrial NADH:ubiquinone oxidoreductase complex (complex I). Required for normal growth and reproduction. The chain is Probable complex I intermediate-associated protein 30, mitochondrial (nuaf-1) from Caenorhabditis elegans.